Here is a 238-residue protein sequence, read N- to C-terminus: Probable transcriptional regulatory protein SAK_1658 (238 aa).

It belongs to the TACO1 family. YeeN subfamily.

Its subcellular location is the cytoplasm. This chain is Probable transcriptional regulatory protein SAK_1658, found in Streptococcus agalactiae serotype Ia (strain ATCC 27591 / A909 / CDC SS700).